Consider the following 169-residue polypeptide: Anaerobic nitrite reductase NSHB3 (169 aa).

The 151-residue stretch at 15-165 folds into the Globin domain; it reads RFTEEQEALV…LVAAIKQGMK (151 aa). Positions 48 to 52 match the Homodimerization motif; sequence EVAPS. Heme b contacts are provided by S58, K72, H76, R106, T110, and H111. Positions 118-130 match the Homodimerization motif; the sequence is DAHFEVAKFALLE.

Belongs to the plant globin family. Homodimer. Heme b serves as cofactor.

The protein resides in the cytoplasm. The protein localises to the nucleus. It catalyses the reaction Fe(III)-heme b-[protein] + nitric oxide + H2O = Fe(II)-heme b-[protein] + nitrite + 2 H(+). Functionally, phytoglobin that reduces nitrite to nitric oxide under anoxic conditions (e.g. during flooding or in waterlogged soil). May not function as an oxygen storage or transport protein. Has an unusually high affinity for O(2) through an hexacoordinate heme iron because of a very low dissociation constant. The polypeptide is Anaerobic nitrite reductase NSHB3 (Oryza sativa subsp. indica (Rice)).